The primary structure comprises 758 residues: POU domain, class 2, transcription factor 1 (758 aa).

Polar residues-rich tracts occupy residues 1–10 (MKLHSSSKIQ), 19–30 (RMNNPSETSKSP), and 275–285 (VQQLPQSQTTP). Disordered stretches follow at residues 1–43 (MKLH…QTNG), 271–296 (AATP…LEEP), 377–398 (TNQS…RRKK), 450–472 (EKRI…LFSS), and 534–573 (SVLT…MTSS). Residues 294–368 (EEPSDLEELE…LLEKWLNDAE (75 aa)) form the POU-specific domain. Residues 395–454 (RRKKRTSIETNIRVALEKSFLENQKPTSEEITMIADQLNMEKEVIRVWFCNRRQKEKRIN) constitute a DNA-binding region (homeobox). A compositionally biased stretch (low complexity) spans 455–472 (PPSSGGSSSSPIKSLFSS).

The protein belongs to the POU transcription factor family. Class-2 subfamily. As to expression, expressed in oocytes (at protein level). Expressed in the tadpole brain (at protein level).

It localises to the cytoplasm. The protein resides in the nucleus. In terms of biological role, transcription factor that binds to the octamer motif (5'-ATTTGCAT-3') and activates the promoters of the genes of some small nuclear RNAs (snRNA) and histone H2B. In vitro does not bind to variant octamer sequences, such as the H2B octamer 5'-GTTTGCAT-3', although binding has been observed in vivo during early embryogenesis, suggesting that interactions between pou2f1 and other factors might be required for octamer-dependent H2B transcription. Acts downstream of Notch signaling during radial glia formation. May be important for gastrulation, possibly through the regulation of an FGF-type signaling pathway. This chain is POU domain, class 2, transcription factor 1 (pou2f1), found in Xenopus laevis (African clawed frog).